The chain runs to 223 residues: GTP cyclohydrolase 1 (223 aa).

Zn(2+) is bound by residues cysteine 114, histidine 117, and cysteine 185.

It belongs to the GTP cyclohydrolase I family. Homomer.

It catalyses the reaction GTP + H2O = 7,8-dihydroneopterin 3'-triphosphate + formate + H(+). It participates in cofactor biosynthesis; 7,8-dihydroneopterin triphosphate biosynthesis; 7,8-dihydroneopterin triphosphate from GTP: step 1/1. The polypeptide is GTP cyclohydrolase 1 (Chlorobium phaeovibrioides (strain DSM 265 / 1930) (Prosthecochloris vibrioformis (strain DSM 265))).